A 224-amino-acid polypeptide reads, in one-letter code: Proteasome subunit beta (224 aa).

A propeptide spans 1–6 (removed in mature form; by autocatalysis); sequence MDVMKG. T7 functions as the Nucleophile in the catalytic mechanism.

This sequence belongs to the peptidase T1B family. The 20S proteasome core is composed of 14 alpha and 14 beta subunits that assemble into four stacked heptameric rings, resulting in a barrel-shaped structure. The two inner rings, each composed of seven catalytic beta subunits, are sandwiched by two outer rings, each composed of seven alpha subunits. The catalytic chamber with the active sites is on the inside of the barrel. Has a gated structure, the ends of the cylinder being occluded by the N-termini of the alpha-subunits. Is capped at one or both ends by the proteasome regulatory ATPase, PAN.

The protein localises to the cytoplasm. It carries out the reaction Cleavage of peptide bonds with very broad specificity.. Its activity is regulated as follows. The formation of the proteasomal ATPase PAN-20S proteasome complex, via the docking of the C-termini of PAN into the intersubunit pockets in the alpha-rings, triggers opening of the gate for substrate entry. Interconversion between the open-gate and close-gate conformations leads to a dynamic regulation of the 20S proteasome proteolysis activity. Component of the proteasome core, a large protease complex with broad specificity involved in protein degradation. The M.jannaschii proteasome is able to cleave oligopeptides after Glu, Asp, Tyr, Phe, Trp, slightly after Arg, but not after Ala. Thus, displays caspase-like and chymotrypsin-like activities and low level of trypsin-like activity. This is Proteasome subunit beta from Methanocaldococcus jannaschii (strain ATCC 43067 / DSM 2661 / JAL-1 / JCM 10045 / NBRC 100440) (Methanococcus jannaschii).